A 206-amino-acid polypeptide reads, in one-letter code: Thymidylate kinase (206 aa).

11–18 (GIDGAGKT) is a binding site for ATP.

The protein belongs to the thymidylate kinase family.

The enzyme catalyses dTMP + ATP = dTDP + ADP. In terms of biological role, phosphorylation of dTMP to form dTDP in both de novo and salvage pathways of dTTP synthesis. The sequence is that of Thymidylate kinase from Burkholderia mallei (strain NCTC 10247).